The sequence spans 501 residues: ATP synthase subunit alpha (501 aa).

169-176 serves as a coordination point for ATP; sequence GDRQTGKT.

Belongs to the ATPase alpha/beta chains family. In terms of assembly, F-type ATPases have 2 components, CF(1) - the catalytic core - and CF(0) - the membrane proton channel. CF(1) has five subunits: alpha(3), beta(3), gamma(1), delta(1), epsilon(1). CF(0) has three main subunits: a(1), b(2) and c(9-12). The alpha and beta chains form an alternating ring which encloses part of the gamma chain. CF(1) is attached to CF(0) by a central stalk formed by the gamma and epsilon chains, while a peripheral stalk is formed by the delta and b chains.

It localises to the cell membrane. The enzyme catalyses ATP + H2O + 4 H(+)(in) = ADP + phosphate + 5 H(+)(out). In terms of biological role, produces ATP from ADP in the presence of a proton gradient across the membrane. The alpha chain is a regulatory subunit. The polypeptide is ATP synthase subunit alpha (Streptococcus uberis (strain ATCC BAA-854 / 0140J)).